A 473-amino-acid chain; its full sequence is Photosystem II CP43 reaction center protein (473 aa).

Positions 1-14 (MKTLYSLRRFYPVE) are excised as a propeptide. An N-acetylthreonine modification is found at threonine 15. Position 15 is a phosphothreonine (threonine 15). The next 5 membrane-spanning stretches (helical) occupy residues 69–93 (LFEV…PHLA), 134–155 (LLGP…KDRN), 178–200 (KALY…RKIT), 255–275 (KPFA…LSYS), and 291–312 (WFNN…ASQA). Glutamate 367 is a [CaMn4O5] cluster binding site. A helical transmembrane segment spans residues 447-471 (RARAAAAGFEKGIDRDLEPVLSMTP).

Belongs to the PsbB/PsbC family. PsbC subfamily. As to quaternary structure, PSII is composed of 1 copy each of membrane proteins PsbA, PsbB, PsbC, PsbD, PsbE, PsbF, PsbH, PsbI, PsbJ, PsbK, PsbL, PsbM, PsbT, PsbX, PsbY, PsbZ, Psb30/Ycf12, at least 3 peripheral proteins of the oxygen-evolving complex and a large number of cofactors. It forms dimeric complexes. It depends on Binds multiple chlorophylls and provides some of the ligands for the Ca-4Mn-5O cluster of the oxygen-evolving complex. It may also provide a ligand for a Cl- that is required for oxygen evolution. PSII binds additional chlorophylls, carotenoids and specific lipids. as a cofactor.

Its subcellular location is the plastid. The protein localises to the chloroplast thylakoid membrane. Functionally, one of the components of the core complex of photosystem II (PSII). It binds chlorophyll and helps catalyze the primary light-induced photochemical processes of PSII. PSII is a light-driven water:plastoquinone oxidoreductase, using light energy to abstract electrons from H(2)O, generating O(2) and a proton gradient subsequently used for ATP formation. The sequence is that of Photosystem II CP43 reaction center protein from Acorus calamus var. americanus (American sweet flag).